The chain runs to 119 residues: Large ribosomal subunit protein eL8 (119 aa).

Belongs to the eukaryotic ribosomal protein eL8 family. Part of the 50S ribosomal subunit. Probably part of the RNase P complex.

The protein resides in the cytoplasm. Its function is as follows. Multifunctional RNA-binding protein that recognizes the K-turn motif in ribosomal RNA, the RNA component of RNase P, box H/ACA, box C/D and box C'/D' sRNAs. The sequence is that of Large ribosomal subunit protein eL8 from Archaeoglobus fulgidus (strain ATCC 49558 / DSM 4304 / JCM 9628 / NBRC 100126 / VC-16).